Reading from the N-terminus, the 710-residue chain is Tubulin polyglutamylase TTLL11 (710 aa).

A disordered region spans residues 41-135 (VRVDAGAAGE…QRPVTVDSSK (95 aa)). Positions 51–60 (PECKAGEEQP) are enriched in basic and acidic residues. A compositionally biased stretch (low complexity) spans 64 to 82 (APAPAQPSAAEEGNTQVLQ). Residues 83–93 (RPPPTLPPSKP) show a composition bias toward pro residues. The span at 123 to 135 (NGSQRPVTVDSSK) shows a compositional bias: polar residues. One can recognise a TTL domain in the interval 128-480 (PVTVDSSKAR…EVKVAVIRDT (353 aa)). ATP-binding positions include Lys-249, 255–256 (QG), 282–285 (QEYI), and 295–297 (KFD). Residue Gln-255 coordinates a protein. Arg-321 serves as a coordination point for L-glutamate. 343 to 344 (TN) lines the ATP pocket. Tyr-345, Ser-346, and Lys-365 together coordinate L-glutamate. The Mg(2+) site is built by Asp-428, Glu-441, and Asn-443. The tract at residues 467 to 538 (LVDEEVKVAV…SICLKQVFPK (72 aa)) is c-MTBD region. Lys-473 contributes to the L-glutamate binding site. The segment at 665–710 (GVPSGGRPPHRGPPQEPSPSAQPAGDNPPPRTSCANKLSHPRHTLS) is disordered.

This sequence belongs to the tubulin--tyrosine ligase family. Mg(2+) serves as cofactor.

The protein resides in the cytoplasm. It localises to the cytoskeleton. The protein localises to the cilium basal body. The enzyme catalyses L-glutamyl-[protein] + L-glutamate + ATP = gamma-L-glutamyl-L-glutamyl-[protein] + ADP + phosphate + H(+). It carries out the reaction (L-glutamyl)(n)-gamma-L-glutamyl-L-glutamyl-[protein] + L-glutamate + ATP = (L-glutamyl)(n+1)-gamma-L-glutamyl-L-glutamyl-[protein] + ADP + phosphate + H(+). Polyglutamylase which modifies tubulin, generating polyglutamate side chains of variable lengths on the gamma-carboxyl group of specific glutamate residues within the C-terminal tail of tubulin. Preferentially mediates ATP-dependent polyglutamate long side-chain elongation over the initiation step of the polyglutamylation reaction. Preferentially modifies the alpha-tubulin tail over a beta-tail. Required for CCSAP localization to both spindle and cilia microtubules. Promotes tubulin polyglutamylation which stimulates spastin/SPAST-mediated microtubule severing, thereby regulating microtubule functions. This Homo sapiens (Human) protein is Tubulin polyglutamylase TTLL11.